A 261-amino-acid chain; its full sequence is Cytochrome c oxidase subunit 3 (261 aa).

The Mitochondrial matrix segment spans residues 1 to 15 (MAHQAHAYHMVDPSP). Residues 16–34 (WPLTGAIAALLMTSGLAIW) form a helical membrane-spanning segment. Over 35 to 40 (FHFHST) the chain is Mitochondrial intermembrane. The helical transmembrane segment at 41-66 (TLMTLGLILLLLTMYQWWRDIIREGT) threads the bilayer. The Mitochondrial matrix segment spans residues 67–72 (FQGHHT). A helical transmembrane segment spans residues 73 to 105 (PPVQKGLRYGMILFITSEVFFFLGFFWAFYHSS). Residues 106 to 128 (LAPTPELGGCWPPTGITPLDPFE) lie on the Mitochondrial intermembrane side of the membrane. Residues 129–152 (VPLLNTAVLLASGVTVTWAHHSIM) traverse the membrane as a helical segment. The Mitochondrial matrix segment spans residues 153–155 (EGE). Residues 156 to 183 (RKQAIQSLALTILLGFYFTALQAMEYYE) form a helical membrane-spanning segment. Residues 184–190 (APFTIAD) are Mitochondrial intermembrane-facing. Residues 191–223 (GVYGSTFFVATGFHGLHVIIGSTFLAVCLLRQI) traverse the membrane as a helical segment. Over 224–232 (QYHFTSEHH) the chain is Mitochondrial matrix. Residues 233–256 (FGFEAAAWYWHFVDVVWLFLYVSI) form a helical membrane-spanning segment. Topologically, residues 257–261 (YWWGS) are mitochondrial intermembrane.

Belongs to the cytochrome c oxidase subunit 3 family. Component of the cytochrome c oxidase (complex IV, CIV), a multisubunit enzyme composed of 14 subunits. The complex is composed of a catalytic core of 3 subunits MT-CO1, MT-CO2 and MT-CO3, encoded in the mitochondrial DNA, and 11 supernumerary subunits COX4I, COX5A, COX5B, COX6A, COX6B, COX6C, COX7A, COX7B, COX7C, COX8 and NDUFA4, which are encoded in the nuclear genome. The complex exists as a monomer or a dimer and forms supercomplexes (SCs) in the inner mitochondrial membrane with NADH-ubiquinone oxidoreductase (complex I, CI) and ubiquinol-cytochrome c oxidoreductase (cytochrome b-c1 complex, complex III, CIII), resulting in different assemblies (supercomplex SCI(1)III(2)IV(1) and megacomplex MCI(2)III(2)IV(2)).

The protein localises to the mitochondrion inner membrane. The catalysed reaction is 4 Fe(II)-[cytochrome c] + O2 + 8 H(+)(in) = 4 Fe(III)-[cytochrome c] + 2 H2O + 4 H(+)(out). Its function is as follows. Component of the cytochrome c oxidase, the last enzyme in the mitochondrial electron transport chain which drives oxidative phosphorylation. The respiratory chain contains 3 multisubunit complexes succinate dehydrogenase (complex II, CII), ubiquinol-cytochrome c oxidoreductase (cytochrome b-c1 complex, complex III, CIII) and cytochrome c oxidase (complex IV, CIV), that cooperate to transfer electrons derived from NADH and succinate to molecular oxygen, creating an electrochemical gradient over the inner membrane that drives transmembrane transport and the ATP synthase. Cytochrome c oxidase is the component of the respiratory chain that catalyzes the reduction of oxygen to water. Electrons originating from reduced cytochrome c in the intermembrane space (IMS) are transferred via the dinuclear copper A center (CU(A)) of subunit 2 and heme A of subunit 1 to the active site in subunit 1, a binuclear center (BNC) formed by heme A3 and copper B (CU(B)). The BNC reduces molecular oxygen to 2 water molecules using 4 electrons from cytochrome c in the IMS and 4 protons from the mitochondrial matrix. This chain is Cytochrome c oxidase subunit 3 (mt-co3), found in Carassius auratus (Goldfish).